The following is a 518-amino-acid chain: Protein nucleotidyltransferase YdiU (518 aa).

ATP contacts are provided by Gly109, Gly111, Arg112, Lys131, Asp143, Gly144, Arg194, and Arg201. Catalysis depends on Asp270, which acts as the Proton acceptor. 2 residues coordinate Mg(2+): Asn271 and Asp280. Asp280 serves as a coordination point for ATP.

It belongs to the SELO family. Requires Mg(2+) as cofactor. It depends on Mn(2+) as a cofactor.

The catalysed reaction is L-seryl-[protein] + ATP = 3-O-(5'-adenylyl)-L-seryl-[protein] + diphosphate. It catalyses the reaction L-threonyl-[protein] + ATP = 3-O-(5'-adenylyl)-L-threonyl-[protein] + diphosphate. It carries out the reaction L-tyrosyl-[protein] + ATP = O-(5'-adenylyl)-L-tyrosyl-[protein] + diphosphate. The enzyme catalyses L-histidyl-[protein] + UTP = N(tele)-(5'-uridylyl)-L-histidyl-[protein] + diphosphate. The catalysed reaction is L-seryl-[protein] + UTP = O-(5'-uridylyl)-L-seryl-[protein] + diphosphate. It catalyses the reaction L-tyrosyl-[protein] + UTP = O-(5'-uridylyl)-L-tyrosyl-[protein] + diphosphate. Nucleotidyltransferase involved in the post-translational modification of proteins. It can catalyze the addition of adenosine monophosphate (AMP) or uridine monophosphate (UMP) to a protein, resulting in modifications known as AMPylation and UMPylation. The chain is Protein nucleotidyltransferase YdiU from Paraburkholderia xenovorans (strain LB400).